The sequence spans 212 residues: Octanoyltransferase (212 aa).

Positions 34–208 constitute a BPL/LPL catalytic domain; sequence GQRQDTLILL…AFERQFNARC (175 aa). Residues 72 to 79, 139 to 141, and 152 to 154 contribute to the substrate site; these read RGGQVTYH, SIG, and GLS. Cys-170 (acyl-thioester intermediate) is an active-site residue.

The protein belongs to the LipB family.

It is found in the cytoplasm. The catalysed reaction is octanoyl-[ACP] + L-lysyl-[protein] = N(6)-octanoyl-L-lysyl-[protein] + holo-[ACP] + H(+). It functions in the pathway protein modification; protein lipoylation via endogenous pathway; protein N(6)-(lipoyl)lysine from octanoyl-[acyl-carrier-protein]: step 1/2. Its function is as follows. Catalyzes the transfer of endogenously produced octanoic acid from octanoyl-acyl-carrier-protein onto the lipoyl domains of lipoate-dependent enzymes. Lipoyl-ACP can also act as a substrate although octanoyl-ACP is likely to be the physiological substrate. The chain is Octanoyltransferase from Magnetococcus marinus (strain ATCC BAA-1437 / JCM 17883 / MC-1).